We begin with the raw amino-acid sequence, 212 residues long: Small ribosomal subunit protein uS19m (212 aa).

The transit peptide at 1 to 29 (MAFCTKLGGHWKQGVNVPVSSMLGSLRYM) directs the protein to the mitochondrion. Residues 31–109 (TKLYIGGLSP…FNISVNVAKD (79 aa)) form the RRM domain.

It belongs to the universal ribosomal protein uS19 family. As to quaternary structure, component of the mitochondrial ribosome small subunit.

It is found in the mitochondrion. The RNA-binding domain found in RPS19 may functionally replace the missing mitochondrial RPS13. This is Small ribosomal subunit protein uS19m (RPS19) from Arabidopsis thaliana (Mouse-ear cress).